Consider the following 167-residue polypeptide: NADH-quinone oxidoreductase subunit I (167 aa).

4Fe-4S ferredoxin-type domains follow at residues 59–88 and 98–127; these read RKYKNGEERCIACKLCEAICPAQAITIEAQ and VRYDIDMTKCIYCGFCQEACPVDAIVEGPN. 8 residues coordinate [4Fe-4S] cluster: cysteine 68, cysteine 71, cysteine 74, cysteine 78, cysteine 107, cysteine 110, cysteine 113, and cysteine 117.

The protein belongs to the complex I 23 kDa subunit family. NDH-1 is composed of 14 different subunits. Subunits NuoA, H, J, K, L, M, N constitute the membrane sector of the complex. Requires [4Fe-4S] cluster as cofactor.

The protein localises to the cell inner membrane. The catalysed reaction is a quinone + NADH + 5 H(+)(in) = a quinol + NAD(+) + 4 H(+)(out). In terms of biological role, NDH-1 shuttles electrons from NADH, via FMN and iron-sulfur (Fe-S) centers, to quinones in the respiratory chain. The immediate electron acceptor for the enzyme in this species is believed to be ubiquinone. Couples the redox reaction to proton translocation (for every two electrons transferred, four hydrogen ions are translocated across the cytoplasmic membrane), and thus conserves the redox energy in a proton gradient. In Ehrlichia canis (strain Jake), this protein is NADH-quinone oxidoreductase subunit I.